We begin with the raw amino-acid sequence, 617 residues long: Serine/threonine-protein phosphatase 2A activator 1 (617 aa).

Residues 1–11 show a composition bias toward pro residues; it reads MDPTSKRPPPA. Disordered regions lie at residues 1–25, 84–169, 230–261, 376–398, and 572–617; these read MDPTSKRPPPAASSSTTYPPLPKLE, VSTS…ESES, GAGGEKKEEEEGTETETETETEGDSDKKTNEQ, SSPNEPTPLEGSVPNAPKPSDIT, and RFTP…PWTK. The span at 84 to 93 shows a compositional bias: polar residues; it reads VSTSEPTTDG. Low complexity predominate over residues 94 to 104; that stretch reads QQQQQQQQQRQ. Residues 239 to 252 are compositionally biased toward acidic residues; sequence EEGTETETETETEG.

This sequence belongs to the PTPA-type PPIase family.

It is found in the cytoplasm. The protein localises to the nucleus. The enzyme catalyses [protein]-peptidylproline (omega=180) = [protein]-peptidylproline (omega=0). In terms of biological role, PPIases accelerate the folding of proteins. It catalyzes the cis-trans isomerization of proline imidic peptide bonds in oligopeptides. Acts as a regulatory subunit for PP2A-like phosphatases modulating their activity or substrate specificity, probably by inducing a conformational change in the catalytic subunit, a direct target of the PPIase. Can reactivate inactive phosphatase PP2A-phosphatase methylesterase complexes (PP2Ai) in presence of ATP and Mg(2+) by dissociating the inactive form from the complex. In Neurospora crassa (strain ATCC 24698 / 74-OR23-1A / CBS 708.71 / DSM 1257 / FGSC 987), this protein is Serine/threonine-protein phosphatase 2A activator 1 (rrd-1).